A 175-amino-acid polypeptide reads, in one-letter code: Ribosome maturation factor RimM (175 aa).

Residues 96 to 175 (EEDFYWRDLI…LIQVNWEPDF (80 aa)) form the PRC barrel domain.

It belongs to the RimM family. In terms of assembly, binds ribosomal protein uS19.

The protein resides in the cytoplasm. In terms of biological role, an accessory protein needed during the final step in the assembly of 30S ribosomal subunit, possibly for assembly of the head region. Essential for efficient processing of 16S rRNA. May be needed both before and after RbfA during the maturation of 16S rRNA. It has affinity for free ribosomal 30S subunits but not for 70S ribosomes. The chain is Ribosome maturation factor RimM from Psychromonas ingrahamii (strain DSM 17664 / CCUG 51855 / 37).